Reading from the N-terminus, the 176-residue chain is Dynein light chain Tctex-type 5-B (176 aa).

The protein belongs to the dynein light chain Tctex-type family.

This Xenopus laevis (African clawed frog) protein is Dynein light chain Tctex-type 5-B (Dynlt5-b).